The sequence spans 144 residues: UPF0102 protein BMA2801 (144 aa).

Positions 1–28 (MCHAREASPGTGEPEAAPRDNFPRAAGS) are disordered.

The protein belongs to the UPF0102 family.

The chain is UPF0102 protein BMA2801 from Burkholderia mallei (strain ATCC 23344).